Here is a 255-residue protein sequence, read N- to C-terminus: Putative OPA3-like protein CG13603 (255 aa).

Positions K108–R154 form a coiled coil. A disordered region spans residues V168–F187. The stretch at D212–T241 forms a coiled coil.

The protein belongs to the OPA3 family.

This is Putative OPA3-like protein CG13603 from Drosophila melanogaster (Fruit fly).